The chain runs to 75 residues: Conotoxin VnMKLT2-012 (75 aa).

A signal peptide spans methionine 1 to alanine 23. Positions glutamate 24–arginine 45 are excised as a propeptide. The span at alanine 31 to arginine 45 shows a compositional bias: basic and acidic residues. Positions alanine 31–serine 50 are disordered. 3 disulfides stabilise this stretch: cysteine 47–cysteine 60, cysteine 54–cysteine 65, and cysteine 59–cysteine 74.

Belongs to the conotoxin O1 superfamily. Expressed by the venom duct.

It is found in the secreted. This is Conotoxin VnMKLT2-012 from Conus ventricosus (Mediterranean cone).